Consider the following 69-residue polypeptide: MKKNIHPEYKKIFATCSCGYTIPIFSTKSSDMSLDVCSQCHPFYTGKQRTMNKKGRIQRFKKRFNFSEI.

Positions 16, 18, 37, and 40 each coordinate Zn(2+).

This sequence belongs to the bacterial ribosomal protein bL31 family. Type A subfamily. As to quaternary structure, part of the 50S ribosomal subunit. The cofactor is Zn(2+).

Binds the 23S rRNA. The polypeptide is Large ribosomal subunit protein bL31 (Buchnera aphidicola subsp. Cinara cedri (strain Cc)).